A 254-amino-acid polypeptide reads, in one-letter code: Photosystem II 22 kDa protein 2, chloroplastic (254 aa).

The N-terminal 38 residues, 1–38, are a transit peptide targeting the chloroplast; that stretch reads MALQQSMAMPMMVVSDLGTAPRSSPMVQLQRMKKHLVV. A run of 2 repeats spans residues 42 to 148 and 149 to 253. 4 helical membrane passes run 86–106, 120–140, 184–204, and 219–239; these read VAMLGFAASLLGEAVTGKGIL, AEPLLLFFILFTLLGAIGALG, LFVGRLAQLGIAFSLIGEIIT, and PINEIEPLLLFNILFFFFAAI.

It belongs to the ELIP/psbS family.

The protein resides in the plastid. It localises to the chloroplast thylakoid membrane. Functionally, involved in high light-mediated energy-dependent nonphotochemical quenching (NPQ, qE) and thermal dissipation (TD) thus regulating energy conversion in photosystem II and protecting from photoinhibition. Also seems to regulate quantum yield of electron transport in fluctuating light conditions. The protein is Photosystem II 22 kDa protein 2, chloroplastic of Oryza sativa subsp. japonica (Rice).